Consider the following 405-residue polypeptide: Adenylosuccinate synthetase (405 aa).

GTP is bound by residues 12–18 and 40–42; these read GDEGKGK and GHT. Asp-13 functions as the Proton acceptor in the catalytic mechanism. Mg(2+)-binding residues include Asp-13 and Gly-40. Residues 13 to 16, 38 to 41, Thr-121, Arg-135, Gln-213, Thr-228, and Arg-297 contribute to the IMP site; these read DEGK and NAGH. The active-site Proton donor is His-41. 293 to 299 serves as a coordination point for substrate; that stretch reads TTTGRPR. GTP contacts are provided by residues Arg-299, 325-327, and 390-392; these read KMD and SAG.

Belongs to the adenylosuccinate synthetase family. As to quaternary structure, homodimer. It depends on Mg(2+) as a cofactor.

Its subcellular location is the cytoplasm. The enzyme catalyses IMP + L-aspartate + GTP = N(6)-(1,2-dicarboxyethyl)-AMP + GDP + phosphate + 2 H(+). The protein operates within purine metabolism; AMP biosynthesis via de novo pathway; AMP from IMP: step 1/2. In terms of biological role, plays an important role in the de novo pathway of purine nucleotide biosynthesis. Catalyzes the first committed step in the biosynthesis of AMP from IMP. The polypeptide is Adenylosuccinate synthetase (Deinococcus radiodurans (strain ATCC 13939 / DSM 20539 / JCM 16871 / CCUG 27074 / LMG 4051 / NBRC 15346 / NCIMB 9279 / VKM B-1422 / R1)).